The following is a 108-amino-acid chain: Class I hydrophobin hgfII (108 aa).

The signal sequence occupies residues 1-19 (MFSRIAAVSFLALPLLAAA). 4 disulfide bridges follow: C28-C89, C35-C83, C36-C69, and C90-C103. N92 carries an N-linked (GlcNAc...) asparagine glycan.

The protein belongs to the fungal hydrophobin family. In terms of assembly, self-assembles to form functional amyloid fibrils called rodlets with a diameter of 15-30 nm. Self-assembly into fibrillar rodlets occurs spontaneously at hydrophobic:hydrophilic interfaces and the rodlets further associate laterally to form amphipathic monolayers. In terms of tissue distribution, highky expressed in hyphae cultured in liquid medium.

The protein localises to the secreted. It is found in the cell wall. Aerial growth, conidiation, and dispersal of filamentous fungi in the environment rely upon a capability of their secreting small amphipathic proteins called hydrophobins (HPBs) with low sequence identity. Class I can self-assemble into an outermost layer of rodlet bundles on aerial cell surfaces, conferring cellular hydrophobicity that supports fungal growth, development and dispersal; whereas Class II form highly ordered films at water-air interfaces through intermolecular interactions but contribute nothing to the rodlet structure. HgfII is a class I hydrophobin that is involved in cell surface hydrophobicity and might play a key role during the growth and development of hyphae cultured in liquid medium. This Grifola frondosa (Maitake) protein is Class I hydrophobin hgfII.